The chain runs to 315 residues: NAD kinase (315 aa).

Aspartate 91 serves as the catalytic Proton acceptor. Residues aspartate 91–glycine 92, arginine 96, asparagine 165–glutamate 166, aspartate 195, and threonine 206–serine 211 each bind NAD(+).

This sequence belongs to the NAD kinase family. A divalent metal cation serves as cofactor.

It localises to the cytoplasm. The catalysed reaction is NAD(+) + ATP = ADP + NADP(+) + H(+). In terms of biological role, involved in the regulation of the intracellular balance of NAD and NADP, and is a key enzyme in the biosynthesis of NADP. Catalyzes specifically the phosphorylation on 2'-hydroxyl of the adenosine moiety of NAD to yield NADP. This chain is NAD kinase, found in Rhodococcus erythropolis (strain PR4 / NBRC 100887).